Here is a 264-residue protein sequence, read N- to C-terminus: S-adenosylmethionine decarboxylase proenzyme (264 aa).

The active-site Schiff-base intermediate with substrate; via pyruvic acid is the S113. The residue at position 113 (S113) is a Pyruvic acid (Ser); by autocatalysis. Residue H118 is the Proton acceptor; for processing activity of the active site. The active-site Proton donor; for catalytic activity is the C141.

It belongs to the prokaryotic AdoMetDC family. Type 2 subfamily. Heterooctamer of four alpha and four beta chains arranged as a tetramer of alpha/beta heterodimers. Pyruvate serves as cofactor. Is synthesized initially as an inactive proenzyme. Formation of the active enzyme involves a self-maturation process in which the active site pyruvoyl group is generated from an internal serine residue via an autocatalytic post-translational modification. Two non-identical subunits are generated from the proenzyme in this reaction, and the pyruvate is formed at the N-terminus of the alpha chain, which is derived from the carboxyl end of the proenzyme. The post-translation cleavage follows an unusual pathway, termed non-hydrolytic serinolysis, in which the side chain hydroxyl group of the serine supplies its oxygen atom to form the C-terminus of the beta chain, while the remainder of the serine residue undergoes an oxidative deamination to produce ammonia and the pyruvoyl group blocking the N-terminus of the alpha chain.

The enzyme catalyses S-adenosyl-L-methionine + H(+) = S-adenosyl 3-(methylsulfanyl)propylamine + CO2. It functions in the pathway amine and polyamine biosynthesis; S-adenosylmethioninamine biosynthesis; S-adenosylmethioninamine from S-adenosyl-L-methionine: step 1/1. In terms of biological role, catalyzes the decarboxylation of S-adenosylmethionine to S-adenosylmethioninamine (dcAdoMet), the propylamine donor required for the synthesis of the polyamines spermine and spermidine from the diamine putrescine. The chain is S-adenosylmethionine decarboxylase proenzyme from Xylella fastidiosa (strain Temecula1 / ATCC 700964).